The chain runs to 591 residues: Aspartate--tRNA(Asp/Asn) ligase (591 aa).

An L-aspartate-binding site is contributed by Glu-174. Positions 198–201 (QLFK) are aspartate. Arg-220 provides a ligand contact to L-aspartate. ATP is bound by residues 220 to 222 (RDE) and Gln-229. L-aspartate is bound at residue His-450. Glu-483 serves as a coordination point for ATP. Arg-490 provides a ligand contact to L-aspartate. Residue 535-538 (GLDR) coordinates ATP.

This sequence belongs to the class-II aminoacyl-tRNA synthetase family. Type 1 subfamily. As to quaternary structure, homodimer.

Its subcellular location is the cytoplasm. The catalysed reaction is tRNA(Asx) + L-aspartate + ATP = L-aspartyl-tRNA(Asx) + AMP + diphosphate. Its function is as follows. Aspartyl-tRNA synthetase with relaxed tRNA specificity since it is able to aspartylate not only its cognate tRNA(Asp) but also tRNA(Asn). Reaction proceeds in two steps: L-aspartate is first activated by ATP to form Asp-AMP and then transferred to the acceptor end of tRNA(Asp/Asn). The sequence is that of Aspartate--tRNA(Asp/Asn) ligase from Pseudomonas savastanoi pv. phaseolicola (strain 1448A / Race 6) (Pseudomonas syringae pv. phaseolicola (strain 1448A / Race 6)).